A 744-amino-acid chain; its full sequence is NAD(P)H-quinone oxidoreductase subunit 5, chloroplastic (744 aa).

Helical transmembrane passes span 9–29 (WIIP…LLLF), 40–60 (WAFQ…NLSI), 89–109 (IDPL…MVLI), 125–145 (FAYM…SNLI), 147–167 (IYIF…FWFT), 185–205 (GDFG…SFEF), 219–239 (NEVN…GAIA), 258–278 (TPIS…FLVA), 290–312 (IMNF…ALAQ), 327–347 (LGYM…FHLI), 354–374 (ALLF…VGYC), 396–416 (TSFL…CFWS), 425–445 (WLYS…TAFY), 549–569 (LFPI…GIPF), 608–628 (VFSV…YKPV), and 724–744 (YLFF…FLNF).

This sequence belongs to the complex I subunit 5 family. In terms of assembly, NDH is composed of at least 16 different subunits, 5 of which are encoded in the nucleus.

It is found in the plastid. Its subcellular location is the chloroplast thylakoid membrane. It catalyses the reaction a plastoquinone + NADH + (n+1) H(+)(in) = a plastoquinol + NAD(+) + n H(+)(out). The catalysed reaction is a plastoquinone + NADPH + (n+1) H(+)(in) = a plastoquinol + NADP(+) + n H(+)(out). Its function is as follows. NDH shuttles electrons from NAD(P)H:plastoquinone, via FMN and iron-sulfur (Fe-S) centers, to quinones in the photosynthetic chain and possibly in a chloroplast respiratory chain. The immediate electron acceptor for the enzyme in this species is believed to be plastoquinone. Couples the redox reaction to proton translocation, and thus conserves the redox energy in a proton gradient. The protein is NAD(P)H-quinone oxidoreductase subunit 5, chloroplastic (ndhF) of Adenocaulon himalaicum (Trailplant).